The chain runs to 3763 residues: Colossin-B (3763 aa).

The N-terminal stretch at 1–19 (MKGSIFLLFIFQIFKFSSS) is a signal peptide. Asparagine 43, asparagine 110, asparagine 258, and asparagine 284 each carry an N-linked (GlcNAc...) asparagine glycan. The 25-residue stretch at 619 to 643 (DCSTLQCPSGYECKLDKNSKTRGCI) folds into the Follistatin-like 1 domain. 2 N-linked (GlcNAc...) asparagine glycosylation sites follow: asparagine 652 and asparagine 672. Follistatin-like domains lie at 701–724 (HCRN…PRCF) and 729–752 (PCEF…AKCF). The tract at residues 792–832 (PPIFYETPSPTSAPPTETPSPTDTPTDKPTIPPTPTPTPSK) is disordered. Positions 810–820 (PSPTDTPTDKP) are enriched in low complexity. 2 N-linked (GlcNAc...) asparagine glycosylation sites follow: asparagine 845 and asparagine 991. Disordered stretches follow at residues 1033–1068 (LGSS…SESS) and 1095–1124 (PQPT…PTST). A compositionally biased stretch (gly residues) spans 1036–1051 (SGSGSSGNSGSSGSGG). 2 stretches are compositionally biased toward low complexity: residues 1052-1068 (SSND…SESS) and 1099-1124 (PSTD…PTST). The N-linked (GlcNAc...) asparagine glycan is linked to asparagine 1054. Residues 1159 to 1227 (VSGVEITLIQ…LLNKYPIDTS (69 aa)) enclose the CNA-B 1 domain. Asparagine 1229 and asparagine 1247 each carry an N-linked (GlcNAc...) asparagine glycan. The CNA-B 2 domain occupies 1304 to 1373 (IKGIQVTLKD…VYTMDTFQLS (70 aa)). The N-linked (GlcNAc...) asparagine glycan is linked to asparagine 1381. CNA-B domains lie at 1437-1515 (LPGV…IDTK), 1582-1648 (VPGI…LTLD), and 1731-1809 (VGGV…FTLS). Asparagine 1769 and asparagine 1815 each carry an N-linked (GlcNAc...) asparagine glycan. A disordered region spans residues 1883 to 1955 (GSTVDGGTSV…SEQPPEDSME (73 aa)). The span at 1898 to 1948 (STSTTTVSSSPSSSSDIGSSSDISSEVSSSLSSSPSSSEQPSEQSSSSSEQ) shows a compositional bias: low complexity. The CNA-B 6 domain occupies 2015–2083 (VPDVTVTLVN…DPLSGKIDFN (69 aa)). 21 N-linked (GlcNAc...) asparagine glycosylation sites follow: asparagine 2128, asparagine 2145, asparagine 2243, asparagine 2294, asparagine 2351, asparagine 2378, asparagine 2453, asparagine 2493, asparagine 2496, asparagine 2516, asparagine 2572, asparagine 2601, asparagine 2624, asparagine 2668, asparagine 2698, asparagine 2714, asparagine 2781, asparagine 2787, asparagine 2800, asparagine 2838, and asparagine 2858. The CNA-B 7 domain occupies 2143-2197 (FPNITVRLFDQNLQPVLDNFNIQVEPTVTNALGQYYFDNLHSGSYIVKFEVPTRY). The CNA-B 8 domain occupies 2292-2345 (VPNVTVEIFNPTGQQVYNINELLIGSTTTDSNGYYLFDEIQPGSYIIKFSNIPN). The region spanning 2453-2477 (NTTTTDQNGLYYFDNLSPGLYKLLF) is the CNA-B 9 domain. One can recognise a CNA-B 10 domain in the interval 2713–2766 (VNGTIVTLLDINGNTMVDADSYPINSYTTGPDGYYKFDDFSFGKYIITFSGVPD). Positions 2984–3061 (LGGVVVTLYN…DSNASPVDGY (78 aa)) constitute a CNA-B 11 domain. Residues asparagine 3083, asparagine 3130, asparagine 3372, asparagine 3390, asparagine 3459, asparagine 3466, asparagine 3557, asparagine 3666, asparagine 3676, and asparagine 3681 are each glycosylated (N-linked (GlcNAc...) asparagine). A CNA-B 12 domain is found at 3128–3201 (YPNITVSIYT…TKTGVNLGII (74 aa)). One can recognise a CNA-B 13 domain in the interval 3664–3733 (MANITVQLFS…NDKRDLEKIN (70 aa)).

It belongs to the serine-aspartate repeat-containing protein (SDr) family.

The protein resides in the secreted. This Dictyostelium discoideum (Social amoeba) protein is Colossin-B (colB).